A 276-amino-acid polypeptide reads, in one-letter code: Large ribosomal subunit protein uL2 (276 aa).

2 disordered regions span residues 26 to 45 (RSTP…GRNC) and 224 to 276 (AMNP…RGQK). Over residues 259–276 (RDKKKASSKLIIKRRGQK) the composition is skewed to basic residues.

The protein belongs to the universal ribosomal protein uL2 family. As to quaternary structure, part of the 50S ribosomal subunit. Forms a bridge to the 30S subunit in the 70S ribosome.

Its function is as follows. One of the primary rRNA binding proteins. Required for association of the 30S and 50S subunits to form the 70S ribosome, for tRNA binding and peptide bond formation. It has been suggested to have peptidyltransferase activity; this is somewhat controversial. Makes several contacts with the 16S rRNA in the 70S ribosome. This chain is Large ribosomal subunit protein uL2, found in Oleidesulfovibrio alaskensis (strain ATCC BAA-1058 / DSM 17464 / G20) (Desulfovibrio alaskensis).